We begin with the raw amino-acid sequence, 147 residues long: Transthyretin (147 aa).

An N-terminal signal peptide occupies residues 1-20 (MASHRLLLLCLAGLVFVSEA). At Cys-30 the chain carries Sulfocysteine. Lys-35 serves as a coordination point for L-thyroxine. At Glu-62 the chain carries 4-carboxyglutamate. Ser-72 carries the post-translational modification Phosphoserine. An L-thyroxine-binding site is contributed by Glu-74. A glycan (N-linked (GlcNAc...) asparagine) is linked at Asn-118. Residue Ser-137 coordinates L-thyroxine.

This sequence belongs to the transthyretin family. As to quaternary structure, homotetramer. Dimer of dimers. In the homotetramer, subunits assemble around a central channel that can accommodate two ligand molecules. Interacts with RBP4. Post-translationally, sulfonation of the reactive cysteine Cys-30 enhances the stability of the native conformation of TTR, avoiding misassembly of the protein leading to amyloid formation. Detected in liver.

The protein resides in the secreted. Functionally, thyroid hormone-binding protein. Probably transports thyroxine from the bloodstream to the brain. The chain is Transthyretin (TTR) from Pongo abelii (Sumatran orangutan).